A 195-amino-acid chain; its full sequence is Peptidyl-tRNA hydrolase (195 aa).

Y17 is a binding site for tRNA. H22 acts as the Proton acceptor in catalysis. 3 residues coordinate tRNA: F68, N70, and N116.

Belongs to the PTH family. As to quaternary structure, monomer.

It is found in the cytoplasm. It catalyses the reaction an N-acyl-L-alpha-aminoacyl-tRNA + H2O = an N-acyl-L-amino acid + a tRNA + H(+). Functionally, hydrolyzes ribosome-free peptidyl-tRNAs (with 1 or more amino acids incorporated), which drop off the ribosome during protein synthesis, or as a result of ribosome stalling. Its function is as follows. Catalyzes the release of premature peptidyl moieties from peptidyl-tRNA molecules trapped in stalled 50S ribosomal subunits, and thus maintains levels of free tRNAs and 50S ribosomes. The polypeptide is Peptidyl-tRNA hydrolase (Pectobacterium atrosepticum (strain SCRI 1043 / ATCC BAA-672) (Erwinia carotovora subsp. atroseptica)).